The following is a 154-amino-acid chain: uncharacterized protein (154 aa).

Residues cysteine 4, cysteine 7, cysteine 16, cysteine 19, cysteine 24, cysteine 28, histidine 32, and cysteine 36 each contribute to the Zn(2+) site. The segment at 4 to 36 (CSICNESEIKYKCPKCSFPYCSLPCWKIHQSQC) adopts an HIT-type zinc-finger fold.

This is an uncharacterized protein from Schizosaccharomyces pombe (strain 972 / ATCC 24843) (Fission yeast).